A 316-amino-acid chain; its full sequence is Apolipoprotein E (316 aa).

The first 18 residues, 1-18 (MKALWAVLVVTLLAGCLA), serve as a signal peptide directing secretion. Tandem repeats lie at residues 76–97 (VLMEDTMTELKAYKKELEEQLG), 98–119 (PMAEETRARLAKEVQAAQSRLG), 120–141 (ADMEDLRNRLAQYRNEVHTMLG), 142–163 (QSTEELRARLSTHLRKLRKRLM), 164–185 (RDAEDLQKRLAVYKAGAREGAE), 186–207 (RGVGAIRERLGPLVEQGRQRTA), 208–229 (NLGAGAGKPLQDRAQALGARIR), and 230–251 (GRLEEVGNQARDRLEEMREQME). The interval 76–251 (VLMEDTMTEL…RLEEMREQME (176 aa)) is 8 X 22 AA approximate tandem repeats. Methionine 139 is subject to Methionine sulfoxide. The residue at position 143 (serine 143) is a Phosphoserine. Residues 154–164 (HLRKLRKRLMR) form an LDL and other lipoprotein receptors binding region. 158–161 (LRKR) serves as a coordination point for heparin. Residues 206–286 (TANLGAGAGK…GWFEPLVEDM (81 aa)) form a lipid-binding and lipoprotein association region. 225–232 (GARIRGRL) is a binding site for heparin. The homooligomerization stretch occupies residues 262 to 316 (QQMRLQAEIFQARLKGWFEPLVEDMQRQWANLVEKIQASVAANPIPPSSVPQESP). Residues 274–286 (RLKGWFEPLVEDM) are specificity for association with VLDL.

This sequence belongs to the apolipoprotein A1/A4/E family. In terms of assembly, homotetramer. May interact with ABCA1; functionally associated with ABCA1 in the biogenesis of HDLs. May interact with APP/A4 amyloid-beta peptide; the interaction is extremely stable in vitro but its physiological significance is unclear. May interact with MAPT. May interact with MAP2. In the cerebrospinal fluid, interacts with secreted SORL1. Interacts with PMEL; this allows the loading of PMEL luminal fragment on ILVs to induce fibril nucleation. Post-translationally, APOE exists as multiple glycosylated and sialylated glycoforms within cells and in plasma. The extent of glycosylation and sialylation are tissue and context specific. Glycated in plasma VLDL. In terms of processing, phosphorylated by FAM20C in the extracellular medium.

It is found in the secreted. Its subcellular location is the extracellular space. It localises to the extracellular matrix. The protein localises to the extracellular vesicle. The protein resides in the endosome. It is found in the multivesicular body. APOE is an apolipoprotein, a protein associating with lipid particles, that mainly functions in lipoprotein-mediated lipid transport between organs via the plasma and interstitial fluids. APOE is a core component of plasma lipoproteins and is involved in their production, conversion and clearance. Apolipoproteins are amphipathic molecules that interact both with lipids of the lipoprotein particle core and the aqueous environment of the plasma. As such, APOE associates with chylomicrons, chylomicron remnants, very low density lipoproteins (VLDL) and intermediate density lipoproteins (IDL) but shows a preferential binding to high-density lipoproteins (HDL). It also binds a wide range of cellular receptors including the LDL receptor/LDLR, the LDL receptor-related proteins LRP1, LRP2 and LRP8 and the very low-density lipoprotein receptor/VLDLR that mediate the cellular uptake of the APOE-containing lipoprotein particles. Finally, APOE also has a heparin-binding activity and binds heparan-sulfate proteoglycans on the surface of cells, a property that supports the capture and the receptor-mediated uptake of APOE-containing lipoproteins by cells. A main function of APOE is to mediate lipoprotein clearance through the uptake of chylomicrons, VLDLs, and HDLs by hepatocytes. APOE is also involved in the biosynthesis by the liver of VLDLs as well as their uptake by peripheral tissues ensuring the delivery of triglycerides and energy storage in muscle, heart and adipose tissues. By participating in the lipoprotein-mediated distribution of lipids among tissues, APOE plays a critical role in plasma and tissues lipid homeostasis. APOE is also involved in two steps of reverse cholesterol transport, the HDLs-mediated transport of cholesterol from peripheral tissues to the liver, and thereby plays an important role in cholesterol homeostasis. First, it is functionally associated with ABCA1 in the biogenesis of HDLs in tissues. Second, it is enriched in circulating HDLs and mediates their uptake by hepatocytes. APOE also plays an important role in lipid transport in the central nervous system, regulating neuron survival and sprouting. The protein is Apolipoprotein E (Apoe) of Peromyscus leucopus (White-footed mouse).